A 179-amino-acid polypeptide reads, in one-letter code: Large ribosomal subunit protein uL5 (179 aa).

Belongs to the universal ribosomal protein uL5 family. As to quaternary structure, part of the 50S ribosomal subunit; part of the 5S rRNA/L5/L18/L25 subcomplex. Contacts the 5S rRNA and the P site tRNA. Forms a bridge to the 30S subunit in the 70S ribosome.

Functionally, this is one of the proteins that bind and probably mediate the attachment of the 5S RNA into the large ribosomal subunit, where it forms part of the central protuberance. In the 70S ribosome it contacts protein S13 of the 30S subunit (bridge B1b), connecting the 2 subunits; this bridge is implicated in subunit movement. Contacts the P site tRNA; the 5S rRNA and some of its associated proteins might help stabilize positioning of ribosome-bound tRNAs. The protein is Large ribosomal subunit protein uL5 of Herpetosiphon aurantiacus (strain ATCC 23779 / DSM 785 / 114-95).